The following is a 555-amino-acid chain: MASAKDAQPAPEKSLSSDPQPEPSKKGARFWLIFVAISLTTFLAALDTSIISTALPTITADLGSESLYVWIIDAYLLASTATIPIFAQAANIYGRRSLTLIAVCIFTLGSGLCGGAHNTAMMVGGRAVQGIGGGGILTMSEIVVCDMVSIRERGMYAGIIGGVWAIAAVVAPVMGGAFAQNISWRWIFYINLPIAGVSLVALGLFLKLSRPPSGTFKEQMSRIDWGGSVLLIGSVTSIVLALSWGGSEHPWSGWQTIVPLVIGLLALVAFFAYQGAPWLREPTMPLRLFSNRTSSTLLVISFIHSLLLYWICYFLPVYFQAVKEASPTRSAVMLFPIACTSAPAGVAAGITITKTGKYRVWHFTGFVLMSIACGLFTLLDAQSSTGRWVGFQILFGVGTGTVFTSTLPPILASLPDSDVATATGAWTFIRNFGSIWGVAIPAAVFNNHVNHAAPKISDSSVKSLLVDGGAYEHATQHFIKSLSPNPDLKTQVIQVYLEGLKVVWQVSLAFCLLGFILCFFVRSLTLRDELNTEFGLKEEKPNSNNMSSEEGVVRD.

The segment at 1–23 (MASAKDAQPAPEKSLSSDPQPEP) is disordered. The next 5 helical transmembrane spans lie at 31–51 (WLIF…TSII), 67–87 (LYVW…PIFA), 97–117 (SLTL…GGAH), 130–150 (GIGG…MVSI), and 159–179 (IIGG…GAFA). Asn-181 carries an N-linked (GlcNAc...) asparagine glycan. 3 helical membrane-spanning segments follow: residues 186 to 206 (WIFY…GLFL), 225 to 245 (WGGS…LSWG), and 253 to 273 (GWQT…FFAY). Asn-291 is a glycosylation site (N-linked (GlcNAc...) asparagine). 6 helical membrane-spanning segments follow: residues 297–317 (LLVI…FLPV), 332–352 (VMLF…GITI), 360–380 (VWHF…TLLD), 393–413 (ILFG…ILAS), 425–445 (AWTF…AAVF), and 501–521 (KVVW…CFFV). N-linked (GlcNAc...) asparagine glycosylation is present at Asn-545.

This sequence belongs to the major facilitator superfamily. TCR/Tet family.

It is found in the membrane. Its function is as follows. Efflux pump; part of the gene cluster that mediates the biosynthesis of the mycotoxin fusarin C. Within the cluster, FUS1, FUS2, FUS8 and FUS9 are sufficient for fusarin production. The other FUS cluster members are not essential for fusarin C biosynthesis. The chain is Efflux pump FUS6 from Gibberella fujikuroi (strain CBS 195.34 / IMI 58289 / NRRL A-6831) (Bakanae and foot rot disease fungus).